Consider the following 270-residue polypeptide: Fibroblast growth factor 5 (270 aa).

The first 20 residues, 1–20 (MSLSLLLLLFLSHLILSAWA), serve as a signal peptide directing secretion. The segment at 26–84 (LAPKGQPGPAATGRNPGGAGGSSTSGGTTSSSSSSVSSAPGASPGIRGSGSEQGSFQWS) is disordered. Positions 40 to 49 (NPGGAGGSST) are enriched in gly residues. Over residues 50-70 (SGGTTSSSSSSVSSAPGASPG) the composition is skewed to low complexity. Positions 75–84 (GSEQGSFQWS) are enriched in polar residues. An N-linked (GlcNAc...) asparagine glycan is attached at Asn112. The interval 237–257 (EKKKPPSHVKPKVPLSAPRKS) is disordered.

Belongs to the heparin-binding growth factors family. As to quaternary structure, interacts with FGFR1 and FGFR2. Affinity between fibroblast growth factors (FGFs) and their receptors is increased by heparan sulfate glycosaminoglycans that function as coreceptors.

The protein resides in the secreted. Plays an important role in the regulation of cell proliferation and cell differentiation. Required for normal regulation of the hair growth cycle. Functions as an inhibitor of hair elongation by promoting progression from anagen, the growth phase of the hair follicle, into catagen the apoptosis-induced regression phase. This is Fibroblast growth factor 5 (FGF5) from Canis lupus familiaris (Dog).